A 207-amino-acid chain; its full sequence is Guanylate kinase (207 aa).

In terms of domain architecture, Guanylate kinase-like spans 6-185; it reads GLLIVLSGPS…AKQRIQSIVE (180 aa). Residue 13–20 coordinates ATP; that stretch reads GPSGVGKG.

This sequence belongs to the guanylate kinase family.

It localises to the cytoplasm. The enzyme catalyses GMP + ATP = GDP + ADP. Essential for recycling GMP and indirectly, cGMP. The protein is Guanylate kinase of Staphylococcus saprophyticus subsp. saprophyticus (strain ATCC 15305 / DSM 20229 / NCIMB 8711 / NCTC 7292 / S-41).